The chain runs to 57 residues: Lantibiotic nisin-Z (57 aa).

The propeptide occupies 1–23 (MSTKDFNLDLVSVSKKDSGASPR). Threonine 25 carries the post-translational modification 2,3-didehydrobutyrine. The lanthionine (Ser-Cys) cross-link spans 26-30 (SISLC). Residue serine 28 is modified to 2,3-didehydroalanine (Ser). Cross-links (beta-methyllanthionine (Thr-Cys)) lie at residues 31 to 34 (TPGC), 36 to 42 (TGALMGC), 46 to 49 (TATC), and 48 to 51 (TCNC). Residue serine 56 is modified to 2,3-didehydroalanine (Ser).

This sequence belongs to the type A lantibiotic family. Maturation of lantibiotics involves the enzymatic conversion of Thr, and Ser into dehydrated AA and the formation of thioether bonds with cysteine. This is followed by membrane translocation and cleavage of the modified precursor. In terms of processing, the structure of the 2,3-didehydrobutyrine is not discussed in PubMed:15361862. It is probably the Z-isomer by similarity.

Lanthionine-containing peptide antibiotic (lantibiotic) active on Gram-positive bacteria. The bactericidal activity of lantibiotics is based on depolarization of energized bacterial cytoplasmic membranes, initiated by the formation of aqueous transmembrane pores. This is Lantibiotic nisin-Z (nisZ) from Lactococcus lactis subsp. lactis (Streptococcus lactis).